The chain runs to 108 residues: T-cell acute lymphocytic leukemia protein 2 homolog (108 aa).

Positions 2–54 (TRKIFTNTRERWRQQSVNNAFAKLRKLIPTHPPDKKLSKNETLRLAMRYINFL) constitute a bHLH domain. The interval 76–108 (GLFPPKTRLPDEDDRTLLNDYRVPSPGPSHGAP) is disordered.

The protein is T-cell acute lymphocytic leukemia protein 2 homolog (Tal2) of Mus musculus (Mouse).